Consider the following 99-residue polypeptide: Pterin-4-alpha-carbinolamine dehydratase (99 aa).

It belongs to the pterin-4-alpha-carbinolamine dehydratase family.

The catalysed reaction is (4aS,6R)-4a-hydroxy-L-erythro-5,6,7,8-tetrahydrobiopterin = (6R)-L-erythro-6,7-dihydrobiopterin + H2O. Involved in tetrahydrobiopterin biosynthesis. This chain is Pterin-4-alpha-carbinolamine dehydratase (pcbd), found in Dictyostelium discoideum (Social amoeba).